Here is a 131-residue protein sequence, read N- to C-terminus: Translation initiation factor 5A (131 aa).

Residue K37 is modified to Hypusine.

This sequence belongs to the eIF-5A family.

The protein localises to the cytoplasm. Its function is as follows. Functions by promoting the formation of the first peptide bond. This Methanococcus maripaludis (strain C6 / ATCC BAA-1332) protein is Translation initiation factor 5A (eIF5A).